Consider the following 825-residue polypeptide: Neuroligin-3 (825 aa).

The first 34 residues, 1–34 (MWLQPSLSLSPTPTVGRSLCLTLGFLSLVLRAST), serve as a signal peptide directing secretion. The Extracellular segment spans residues 35 to 686 (QAPAPTVNTH…NPRDYSTELS (652 aa)). N-linked (GlcNAc...) asparagine glycosylation is present at asparagine 95. The cysteines at positions 103 and 138 are disulfide-linked. Residues 151–172 (SGAKKQGEDLADNDGDEDEDIR) form a disordered region. The segment covering 159–171 (DLADNDGDEDEDI) has biased composition (acidic residues). Cystine bridges form between cysteine 317/cysteine 328 and cysteine 487/cysteine 521. Asparagine 522 is a glycosylation site (N-linked (GlcNAc...) asparagine). Composition is skewed to polar residues over residues 622–633 (TKVPPPDTTHSS) and 654–666 (AYSN…SWNG). The tract at residues 622 to 668 (TKVPPPDTTHSSHITRRPNGKTWSTKRPAISPAYSNENAPGSWNGDQ) is disordered. The chain crosses the membrane as a helical span at residues 687-707 (VTIAVGASLLFLNVLAFAALY). The Cytoplasmic segment spans residues 708–825 (YRKDKRRQEP…LPHSHSTTRV (118 aa)). Serine 722 bears the Phosphoserine mark. Phosphotyrosine is present on tyrosine 769.

It belongs to the type-B carboxylesterase/lipase family. In terms of assembly, homodimer, and heterodimer with NLGN1 and NLGN2. Interacts with neurexins NRXN1, NRXN2 and NRXN3. Interaction with neurexins is mediated by heparan sulfate glycan modification on neurexin. Interacts (via its C-terminus) with DLG4/PSD-95 (via PDZ domain 3). Brain and arteries (at protein level). Detected in heart, brain, spleen, lung, liver, skeletal muscle, kidney and testis. Expressed in olfactory bulb and olfactory epithelium. Found in olfactory ensheathing glia but not in olfactory neurons, and in developing peripheral glia.

The protein resides in the cell membrane. It localises to the synapse. In terms of biological role, cell surface protein involved in cell-cell-interactions via its interactions with neurexin family members. Plays a role in synapse function and synaptic signal transmission, and probably mediates its effects by recruiting and clustering other synaptic proteins. May promote the initial formation of synapses, but is not essential for this. May also play a role in glia-glia or glia-neuron interactions in the developing peripheral nervous system. In Mus musculus (Mouse), this protein is Neuroligin-3 (Nlgn3).